Consider the following 611-residue polypeptide: Creatine transporter (611 aa).

Residues 45-65 (FIMSCVGFAVGLGNVWRFPYL) traverse the membrane as a helical segment. At 66–71 (CYKNGG) the chain is on the extracellular side. The chain crosses the membrane as a helical span at residues 72–92 (GVFLIPYLLVAVFGGIPIFFL). The Cytoplasmic segment spans residues 93 to 122 (EISLGQFMKAGGINAWNIAPLFKGLGYASM). A helical membrane pass occupies residues 123–143 (VIVFFCNTYYILVLTWSSFYL). The Extracellular segment spans residues 144–207 (VQSFSSPLPW…LSSGLGDVGE (64 aa)). N-linked (GlcNAc...) asparagine glycosylation is found at Asn-157 and Asn-171. Residues 208–228 (IGWELTLCLTATWMLVYFCIW) traverse the membrane as a helical segment. Over 229–246 (KGVKTSGKVVYVTATFPY) the chain is Cytoplasmic. A helical membrane pass occupies residues 247 to 267 (IILVILLVRGVTLHGAVQGIV). The Extracellular portion of the chain corresponds to 268-281 (YYLQPDWGKLGEAQ). A helical transmembrane segment spans residues 282-302 (VWIDAGTQIFFSYAIGLGTLT). The Cytoplasmic segment spans residues 303 to 318 (ALGSYNQLHNDCYKDA). A helical membrane pass occupies residues 319–339 (FILSLVNSATSFFAGLVVFSI). Residues 340–371 (LGFMAVEEGVDISVVAESGPGLAFIAYPKAVT) are Extracellular-facing. A helical transmembrane segment spans residues 372 to 392 (LMPFPQVWAVLFFIMLLCLGL). Residues 393–421 (GSQFVGVEGFVTAILDLWPSKFSFRYLRE) are Cytoplasmic-facing. A helical membrane pass occupies residues 422 to 442 (VVVAMVICLSFLIDLSMITEG). Residues 443–456 (GMYIFQIFDYYSAS) are Extracellular-facing. The helical transmembrane segment at 457 to 477 (GTTLLWTAFWECVAVAWVYGG) threads the bilayer. Topologically, residues 478-497 (DRYLDDLAWMLGYRPWALVK) are cytoplasmic. Residues 498–518 (WCWSVITPLVCMGIFTFHLVN) form a helical membrane-spanning segment. Topologically, residues 519 to 537 (YKPLTYNKTYTYPWWGEAI) are extracellular. Asn-525 is a glycosylation site (N-linked (GlcNAc...) asparagine). A helical membrane pass occupies residues 538 to 558 (GWCLALASMLCVPTTVLYSLS). The Cytoplasmic portion of the chain corresponds to 559-611 (RGRGSLKERWRKLTTPVWASHHLAYKMAGAKINQPCEGVVSCEEKVVIFESVL).

The protein belongs to the sodium:neurotransmitter symporter (SNF) (TC 2.A.22) family.

Its subcellular location is the membrane. Its function is as follows. Required for the uptake of creatine. This is Creatine transporter from Torpedo marmorata (Marbled electric ray).